Here is a 236-residue protein sequence, read N- to C-terminus: Phosphoribosylformylglycinamidine synthase subunit PurQ (236 aa).

Residues 3 to 234 form the Glutamine amidotransferase type-1 domain; it reads FGVIVFPGSN…VDWWERGERL (232 aa). Cysteine 86 (nucleophile) is an active-site residue. Residues histidine 203 and glutamate 205 contribute to the active site.

Part of the FGAM synthase complex composed of 1 PurL, 1 PurQ and 2 PurS subunits.

It is found in the cytoplasm. The enzyme catalyses N(2)-formyl-N(1)-(5-phospho-beta-D-ribosyl)glycinamide + L-glutamine + ATP + H2O = 2-formamido-N(1)-(5-O-phospho-beta-D-ribosyl)acetamidine + L-glutamate + ADP + phosphate + H(+). It catalyses the reaction L-glutamine + H2O = L-glutamate + NH4(+). It participates in purine metabolism; IMP biosynthesis via de novo pathway; 5-amino-1-(5-phospho-D-ribosyl)imidazole from N(2)-formyl-N(1)-(5-phospho-D-ribosyl)glycinamide: step 1/2. Functionally, part of the phosphoribosylformylglycinamidine synthase complex involved in the purines biosynthetic pathway. Catalyzes the ATP-dependent conversion of formylglycinamide ribonucleotide (FGAR) and glutamine to yield formylglycinamidine ribonucleotide (FGAM) and glutamate. The FGAM synthase complex is composed of three subunits. PurQ produces an ammonia molecule by converting glutamine to glutamate. PurL transfers the ammonia molecule to FGAR to form FGAM in an ATP-dependent manner. PurS interacts with PurQ and PurL and is thought to assist in the transfer of the ammonia molecule from PurQ to PurL. This chain is Phosphoribosylformylglycinamidine synthase subunit PurQ, found in Moorella thermoacetica (strain ATCC 39073 / JCM 9320).